Reading from the N-terminus, the 732-residue chain is Prolyl tripeptidyl peptidase (732 aa).

Residues 1 to 24 (MKKTIFQQLFLSVCALTVALPCSA) form the signal peptide. Active-site charge relay system residues include S603, D678, and H710.

Belongs to the peptidase S9B family.

The catalysed reaction is Hydrolysis of Xaa-Xaa-Pro-|-Yaa- releasing the N-terminal tripeptide of a peptide with Pro as the third residue (position P1) and where Yaa is not proline.. Its function is as follows. Serine proteinase. Releases tripeptides from the free amino terminus of proteins. Has a requirement for Pro in the P1 position, but is inactivated by Pro in the P1' position. This is Prolyl tripeptidyl peptidase from Porphyromonas gingivalis (strain ATCC 33277 / DSM 20709 / CIP 103683 / JCM 12257 / NCTC 11834 / 2561).